Consider the following 479-residue polypeptide: 3-isopropylmalate dehydratase large subunit (479 aa).

3 residues coordinate [4Fe-4S] cluster: cysteine 350, cysteine 415, and cysteine 418.

This sequence belongs to the aconitase/IPM isomerase family. LeuC type 1 subfamily. In terms of assembly, heterodimer of LeuC and LeuD. The cofactor is [4Fe-4S] cluster.

The enzyme catalyses (2R,3S)-3-isopropylmalate = (2S)-2-isopropylmalate. The protein operates within amino-acid biosynthesis; L-leucine biosynthesis; L-leucine from 3-methyl-2-oxobutanoate: step 2/4. In terms of biological role, catalyzes the isomerization between 2-isopropylmalate and 3-isopropylmalate, via the formation of 2-isopropylmaleate. The protein is 3-isopropylmalate dehydratase large subunit of Caulobacter vibrioides (strain ATCC 19089 / CIP 103742 / CB 15) (Caulobacter crescentus).